Here is a 440-residue protein sequence, read N- to C-terminus: Protein disulfide-isomerase A6 homolog (440 aa).

The N-terminal stretch at 1–18 (MALIKLLLASLAITSVCG) is a signal peptide. Thioredoxin domains lie at 19 to 131 (MYSK…AEAK) and 127 to 273 (LAEA…ARAQ). Residues C54 and C57 each act as nucleophile in the active site. The cysteines at positions 54 and 57 are disulfide-linked. Positions 138 to 164 (LGGKSSGSSSSGSGSGSGKRGGGGSGN) are disordered. Positions 139 to 149 (GGKSSGSSSSG) are enriched in low complexity. Residues 150 to 163 (SGSGSGKRGGGGSG) are compositionally biased toward gly residues. Active-site nucleophile residues include C194 and C197. C194 and C197 form a disulfide bridge. Residues 404 to 426 (DGFPKIQKTEKWDGKDGALPAED) are disordered. Residues 410–419 (QKTEKWDGKD) show a composition bias toward basic and acidic residues. The Prevents secretion from ER motif lies at 437-440 (KTEL).

The protein belongs to the protein disulfide isomerase family.

The protein localises to the endoplasmic reticulum lumen. It catalyses the reaction Catalyzes the rearrangement of -S-S- bonds in proteins.. In terms of biological role, may function as a chaperone that inhibits aggregation of misfolded proteins. May negatively regulate the unfolded protein response (UPR) through binding to UPR sensors. This is Protein disulfide-isomerase A6 homolog from Caenorhabditis elegans.